The following is a 1441-amino-acid chain: MWLTSYVLPRLKNILLLQFHITLPLNYLVLLLLSTVIITYLFLRTRILSNYSQLKDDVSDENNINRKDYMDASSASFLLNREKHKGFTSYLDEFLSAIKIFGYLEKPVFHELTKSMKTEKLQEGEIVLLDDSVGFTIVVEGTLEILHKMDNRHSNPSGDAAANATAFEPPSNDDGYLINGEKFQLLNIVKTGNPLSSLVSIMKLFSNRSTHLNEGTHPSTTNNTPGPGSPNLTGEINSFLDSTLPAKFGSADSANGNHPISPMELESTFDNLSEASENDRSAKIPDIIARAASDCTIAIIPSSSFQRLLVKYPRSASHIIQMILTKLYRVTFKTAHTYLGLTNEIIFTEFQSINKDNLKLPEYFRRSIISYFTNRQDDTGSSASTIQKRPQLHRRDSNNSLNYGSRHVVLNSRDQYNPGDLLSNVPLPRLNPQQRNDLSNTNSSSTLSRADYRPIILNNFSSSQFEETEVSSWRLALVEIIFQQLGITKDTIEPPISDDFSLHDHSLDEKGLVRRSSYSSFTSLSSSIATHSSNHLVTFLPRESQQFSRLNRTGGKMASHSKRLNGSSRSNSRTDRSESFDHFRNENLGGDNQFSDFESVKEDFSKCIKILKFEEGETILCQNSNPQGIYYLVSGEVDVISETKDGNTDESYERTLYTATEGYILGYLSSILGCKSLVTLKVSKGPAYLGLIPYNDLERLCDKYFMIYLKLSEILTNSLSPNLLRLDYFLEWIQLDSSETLFNQGDPANGVYLVLNGRLRQLFYEDADSDIVTQMAELSKGESFGEVEVLTAIHRLNTVVAIRDTELARIPRTLFEFLAVEHPSIMIHVSRMVAKKAMLMNFKSGIGFSGSQPITKLIGDETAMQKRYDFNLNIKSNKSSKKNELISNTVNYKTLTLLPITEGLPVEEFAYKLINALRQCGKTTIGLNQRTTLSHLGRHAFNKLSKLKQSGYFAELEELYEIVVYIADTPVSSSWTQTCISQGDCILLLADATCDPKIGEFERLLLKSKTTARTDLILLHPERYVVPGSTSKWLKNRMWIQSHHHIQFTPMEKVAEPDPIPNIKPLSQLVEKFKENTKKTQENFVKFLPDSIKTTVETLSGKYIDPKPNPKFYTSVDPIKNDFLRLARTLSGQAVGLVLGGGGARGLSHLGIIKALEEQGIPIDIIGGTSIGSFVGGLYAMDYDLVPIYGRVKKFAGRVGSLWRMLSDLTWPVTSYTTGHEFNRGIWKSFRDYRIEDFWISYYCNSTNITESVQEIHSSGFAWRYIRASMSLAGLLPPIVDNGNMLLDGGYVDNLPVTEMTQRGCKIVFAVDVGSVDDRTPMSYGDSLNGFWIVLNRWNPFSKHPNIPNMAEIQMRLGYVASVNALERAKSTPGVVYIRPPIENYATLDFGKFEEIYQVGYAYGHDFLQHLQEKNELPPIAGTTTSAYADKENMLQRRNSI.

Residues 1 to 22 (MWLTSYVLPRLKNILLLQFHIT) are Lumenal-facing. A helical membrane pass occupies residues 23-43 (LPLNYLVLLLLSTVIITYLFL). Topologically, residues 44-1441 (RTRILSNYSQ…ENMLQRRNSI (1398 aa)) are cytoplasmic. 4 disordered regions span residues 154-173 (SNPS…PSND), 210-236 (THLN…TGEI), 376-445 (QDDT…NSSS), and 551-585 (NRTG…HFRN). The segment covering 376 to 388 (QDDTGSSASTIQK) has biased composition (polar residues). The span at 572–585 (SRTDRSESFDHFRN) shows a compositional bias: basic and acidic residues. A nucleoside 3',5'-cyclic phosphate contacts are provided by residues 592-718 (NQFS…LTNS) and 707-836 (IYLK…VAKK). Residues 1137-1301 (LVLGGGGARG…VDNLPVTEMT (165 aa)) form the PNPLA domain. A GXGXXG motif is present at residues 1141–1146 (GGGARG). Residues 1168–1172 (GTSIG) carry the GXSXG motif. Ser1170 serves as the catalytic Nucleophile. The Proton acceptor role is filled by Asp1288. Positions 1288 to 1290 (DGG) match the DGA/G motif.

It belongs to the NTE family.

Its subcellular location is the endoplasmic reticulum membrane. The enzyme catalyses a 1-acyl-sn-glycero-3-phosphocholine + H2O = sn-glycerol 3-phosphocholine + a fatty acid + H(+). Its activity is regulated as follows. Inhibited by organophosphorus esters. In terms of biological role, intracellular phospholipase B that catalyzes the double deacylation of phosphatidylcholine (PC) to glycerophosphocholine (GroPCho). Plays an important role in membrane lipid homeostasis. Responsible for the rapid PC turnover in response to inositol, elevated temperatures, or when choline is present in the growth medium. The chain is Lysophospholipase NTE1 (NTE1) from Kluyveromyces lactis (strain ATCC 8585 / CBS 2359 / DSM 70799 / NBRC 1267 / NRRL Y-1140 / WM37) (Yeast).